A 141-amino-acid chain; its full sequence is Large ribosomal subunit protein uL11 (141 aa).

It belongs to the universal ribosomal protein uL11 family. As to quaternary structure, part of the ribosomal stalk of the 50S ribosomal subunit. Interacts with L10 and the large rRNA to form the base of the stalk. L10 forms an elongated spine to which L12 dimers bind in a sequential fashion forming a multimeric L10(L12)X complex. One or more lysine residues are methylated.

Its function is as follows. Forms part of the ribosomal stalk which helps the ribosome interact with GTP-bound translation factors. This Bacillus cereus (strain ATCC 10987 / NRS 248) protein is Large ribosomal subunit protein uL11.